The following is a 154-amino-acid chain: Myoglobin (154 aa).

The Globin domain occupies 2-148; the sequence is GLSDQEWQHV…FRNDMASKYK (147 aa). His-65 lines the nitrite pocket. His-65 contacts O2. Residue His-94 coordinates heme b.

This sequence belongs to the globin family. In terms of assembly, monomeric.

It is found in the cytoplasm. Its subcellular location is the sarcoplasm. The enzyme catalyses Fe(III)-heme b-[protein] + nitric oxide + H2O = Fe(II)-heme b-[protein] + nitrite + 2 H(+). It carries out the reaction H2O2 + AH2 = A + 2 H2O. Monomeric heme protein which primary function is to store oxygen and facilitate its diffusion within muscle tissues. Reversibly binds oxygen through a pentacoordinated heme iron and enables its timely and efficient release as needed during periods of heightened demand. Depending on the oxidative conditions of tissues and cells, and in addition to its ability to bind oxygen, it also has a nitrite reductase activity whereby it regulates the production of bioactive nitric oxide. Under stress conditions, like hypoxia and anoxia, it also protects cells against reactive oxygen species thanks to its pseudoperoxidase activity. The protein is Myoglobin (MB) of Uria lomvia (Thick-billed murre).